A 200-amino-acid chain; its full sequence is 3-isopropylmalate dehydratase small subunit (200 aa).

It belongs to the LeuD family. LeuD type 1 subfamily. As to quaternary structure, heterodimer of LeuC and LeuD.

It carries out the reaction (2R,3S)-3-isopropylmalate = (2S)-2-isopropylmalate. It participates in amino-acid biosynthesis; L-leucine biosynthesis; L-leucine from 3-methyl-2-oxobutanoate: step 2/4. Its function is as follows. Catalyzes the isomerization between 2-isopropylmalate and 3-isopropylmalate, via the formation of 2-isopropylmaleate. The sequence is that of 3-isopropylmalate dehydratase small subunit from Campylobacter jejuni (strain RM1221).